The following is a 156-amino-acid chain: ATP synthase subunit b (156 aa).

The chain crosses the membrane as a helical span at residues 7–29; sequence LIGQSITFIFFVWFSMKFVWPPI.

This sequence belongs to the ATPase B chain family. In terms of assembly, F-type ATPases have 2 components, F(1) - the catalytic core - and F(0) - the membrane proton channel. F(1) has five subunits: alpha(3), beta(3), gamma(1), delta(1), epsilon(1). F(0) has three main subunits: a(1), b(2) and c(10-14). The alpha and beta chains form an alternating ring which encloses part of the gamma chain. F(1) is attached to F(0) by a central stalk formed by the gamma and epsilon chains, while a peripheral stalk is formed by the delta and b chains.

The protein localises to the cell inner membrane. F(1)F(0) ATP synthase produces ATP from ADP in the presence of a proton or sodium gradient. F-type ATPases consist of two structural domains, F(1) containing the extramembraneous catalytic core and F(0) containing the membrane proton channel, linked together by a central stalk and a peripheral stalk. During catalysis, ATP synthesis in the catalytic domain of F(1) is coupled via a rotary mechanism of the central stalk subunits to proton translocation. In terms of biological role, component of the F(0) channel, it forms part of the peripheral stalk, linking F(1) to F(0). The sequence is that of ATP synthase subunit b from Thiobacillus denitrificans (strain ATCC 25259 / T1).